The chain runs to 572 residues: Sulfite reductase [NADPH] hemoprotein beta-component (572 aa).

Positions 436, 442, 481, and 485 each coordinate [4Fe-4S] cluster. Siroheme is bound at residue Cys485.

The protein belongs to the nitrite and sulfite reductase 4Fe-4S domain family. Alpha(8)-beta(8). The alpha component is a flavoprotein, the beta component is a hemoprotein. Siroheme is required as a cofactor. Requires [4Fe-4S] cluster as cofactor.

The catalysed reaction is hydrogen sulfide + 3 NADP(+) + 3 H2O = sulfite + 3 NADPH + 4 H(+). The protein operates within sulfur metabolism; hydrogen sulfide biosynthesis; hydrogen sulfide from sulfite (NADPH route): step 1/1. Functionally, component of the sulfite reductase complex that catalyzes the 6-electron reduction of sulfite to sulfide. This is one of several activities required for the biosynthesis of L-cysteine from sulfate. This is Sulfite reductase [NADPH] hemoprotein beta-component from Bacillus pumilus (strain SAFR-032).